Here is a 354-residue protein sequence, read N- to C-terminus: 4-hydroxy-3-methylbut-2-en-1-yl diphosphate synthase (flavodoxin) (354 aa).

C265, C268, C300, and E307 together coordinate [4Fe-4S] cluster.

Belongs to the IspG family. The cofactor is [4Fe-4S] cluster.

It catalyses the reaction (2E)-4-hydroxy-3-methylbut-2-enyl diphosphate + oxidized [flavodoxin] + H2O + 2 H(+) = 2-C-methyl-D-erythritol 2,4-cyclic diphosphate + reduced [flavodoxin]. Its pathway is isoprenoid biosynthesis; isopentenyl diphosphate biosynthesis via DXP pathway; isopentenyl diphosphate from 1-deoxy-D-xylulose 5-phosphate: step 5/6. Converts 2C-methyl-D-erythritol 2,4-cyclodiphosphate (ME-2,4cPP) into 1-hydroxy-2-methyl-2-(E)-butenyl 4-diphosphate. The chain is 4-hydroxy-3-methylbut-2-en-1-yl diphosphate synthase (flavodoxin) from Hydrogenobaculum sp. (strain Y04AAS1).